A 447-amino-acid polypeptide reads, in one-letter code: UPF0210 protein LEUM_1180 (447 aa).

The protein belongs to the UPF0210 family. In terms of assembly, homodimer.

This is UPF0210 protein LEUM_1180 from Leuconostoc mesenteroides subsp. mesenteroides (strain ATCC 8293 / DSM 20343 / BCRC 11652 / CCM 1803 / JCM 6124 / NCDO 523 / NBRC 100496 / NCIMB 8023 / NCTC 12954 / NRRL B-1118 / 37Y).